Here is a 460-residue protein sequence, read N- to C-terminus: Glycine--tRNA ligase (460 aa).

Substrate is bound by residues Arg-99 and Glu-162. ATP-binding positions include 194–196 (RNE), 204–209 (FRTREF), 281–282 (EL), and 325–328 (GVGR). 209-213 (FEQME) is a substrate binding site. 321 to 325 (EPAAG) lines the substrate pocket.

It belongs to the class-II aminoacyl-tRNA synthetase family. Homodimer.

The protein localises to the cytoplasm. The catalysed reaction is tRNA(Gly) + glycine + ATP = glycyl-tRNA(Gly) + AMP + diphosphate. Functionally, catalyzes the attachment of glycine to tRNA(Gly). The sequence is that of Glycine--tRNA ligase from Streptomyces coelicolor (strain ATCC BAA-471 / A3(2) / M145).